The chain runs to 303 residues: Cytoplasmic envelopment protein 1 (303 aa).

It belongs to the herpesviridae cytoplasmic envelopment protein 1 family.

The protein resides in the virion. Its subcellular location is the virion tegument. It localises to the host cytoplasm. The protein localises to the host Golgi apparatus. Functionally, plays a critical role in cytoplasmic virus egress. Participates in the final step of tegumentation and envelope acquisition within the host cytoplasm. The polypeptide is Cytoplasmic envelopment protein 1 (Equine herpesvirus 1 (strain Ab4p) (EHV-1)).